The sequence spans 505 residues: OVARIAN TUMOR DOMAIN-containing deubiquitinating enzyme 6 (505 aa).

Residues 1-191 (MTRILVQRGS…NSSDEHMPCY (191 aa)) form a disordered region. A compositionally biased stretch (low complexity) spans 9–30 (GSSGSSSNSSRPSSSSSSSSGS). Basic and acidic residues predominate over residues 51–72 (DEKQEEVTVVEKAECSDAKDVA). The span at 73-86 (VDSDEPADREDDEG) shows a compositional bias: acidic residues. The segment covering 115–124 (PPVPAPPPKP) has biased composition (pro residues). A compositionally biased stretch (low complexity) spans 159-173 (SSRSSPTGSHPSSPR). Residues 174 to 188 (SHSENEGYNSSDEHM) show a composition bias toward basic and acidic residues. The 124-residue stretch at 216–339 (FEIRRMLEDG…GNHYNSLVDP (124 aa)) folds into the OTU domain. Asp-224 is an active-site residue. Residue Cys-227 is the Nucleophile of the active site. His-332 is a catalytic residue. Positions 416 to 447 (RIGPKESSTSNAETSSSGARPSGSDSKPAEAV) are disordered. Low complexity predominate over residues 421-441 (ESSTSNAETSSSGARPSGSDS). The region spanning 446-491 (AVKEKTVLSSSIEMVLSMGFSYAQAMEAYSIFGDDVDSMVCYVLET) is the UBA domain.

This sequence belongs to the peptidase C85 family. As to quaternary structure, interacts with KDM1C. In terms of tissue distribution, mostly expressed in stems flowers and siliques, and, to a lower extent, in leaves, roots and seedlings.

It is found in the nucleus. The protein resides in the cytoplasm. The enzyme catalyses Thiol-dependent hydrolysis of ester, thioester, amide, peptide and isopeptide bonds formed by the C-terminal Gly of ubiquitin (a 76-residue protein attached to proteins as an intracellular targeting signal).. Hydrolase that can remove conjugated ubiquitin from proteins in vitro and may therefore play an important regulatory role at the level of protein turnover by preventing degradation. Binds chromatin (e.g. nucleosomes and histones) and has enzymatic histone deubiquitinase activity, specific for the H2B histone. Can both repress (e.g. OSR2) and promote (e.g. AN3) the expression of target genes by associating with chromatin, deubiquitinating H2B and regulating its euchromatic histone marks (e.g. H3ac and H3K4me). In association with LDL1/KDM1C, involved in transcriptional gene repression via histone deubiquitination and demethylation. Promotes the concerted epigenetic regulation and repression (e.g. the removal of euchromatic histone acetylation, ubiquitination, and methylation marks) of a set of genes (e.g. GA20OX, WUS, OSR2, ARL and ABI5) that collectively limit plant growth thus stimulating plant growth and increasing cell size. The protein is OVARIAN TUMOR DOMAIN-containing deubiquitinating enzyme 6 of Arabidopsis thaliana (Mouse-ear cress).